A 251-amino-acid chain; its full sequence is Auxin-responsive protein IAA29 (251 aa).

The short motif at 3 to 7 is the EAR-like (transcriptional repression) element; it reads LDLGL. The 88-residue stretch at 159-246 folds into the PB1 domain; that stretch reads SMYVKVKMDG…SIIRDRPCAY (88 aa).

The protein belongs to the Aux/IAA family. As to quaternary structure, homodimers and heterodimers.

The protein localises to the nucleus. In terms of biological role, aux/IAA proteins are short-lived transcriptional factors that function as repressors of early auxin response genes at low auxin concentrations. Repression is thought to result from the interaction with auxin response factors (ARFs), proteins that bind to the auxin-responsive promoter element (AuxRE). Formation of heterodimers with ARF proteins may alter their ability to modulate early auxin response genes expression. The protein is Auxin-responsive protein IAA29 (IAA29) of Arabidopsis thaliana (Mouse-ear cress).